A 142-amino-acid polypeptide reads, in one-letter code: DNA polymerase III subunit chi (142 aa).

It belongs to the DNA polymerase III chi/HolC chain family. As to quaternary structure, DNA polymerase III contains a core (composed of alpha, epsilon and theta chains) that associates with a tau subunit. This core dimerizes to form the POLIII' complex. PolIII' associates with the gamma complex (composed of gamma, delta, delta', psi and chi chains) and with the beta chain to form the complete DNA polymerase III complex. Interacts directly with the psi subunit (holD). The only subunit of the DNA polymerase III holoenzyme known to interact with single-stranded DNA binding protein (SSB).

It carries out the reaction DNA(n) + a 2'-deoxyribonucleoside 5'-triphosphate = DNA(n+1) + diphosphate. Part of the beta sliding clamp loading complex, which hydrolyzes ATP to load the beta clamp onto primed DNA to form the DNA replication pre-initiation complex. DNA polymerase III is a complex, multichain enzyme responsible for most of the replicative synthesis in bacteria. This DNA polymerase also exhibits 3' to 5' exonuclease activity. This chain is DNA polymerase III subunit chi, found in Pseudomonas aeruginosa (strain ATCC 15692 / DSM 22644 / CIP 104116 / JCM 14847 / LMG 12228 / 1C / PRS 101 / PAO1).